The sequence spans 377 residues: MSNGIVIIGSGFAARQLVKNIRKQDATIPLTLIAADSMDEYNKPDLSHVISQGQRADDLTRQTAGEFAEQFNLHLFPHTWVTDIDAEARVVKSQNNQWQYDKLVLATGASAFVPSVPGRELMLTLNSQQEYRACETQLRDARRVLIVGGGLIGSELAMDFCRAGKMVTLIDNAASILASLMPPEVSSRLQHRLTEMGVHLLLKSQLQGLEKTDSGILATLDRQRSIEVDAVIAATGLRPETALARRAGLTINRGVCVDSYLQTSNADIYALGDCAEINGQVLPFLQPIQLSAMVLAKNLLGNNTPLKLPAMLVKIKTPELPLHLAGETQRQDLRWQINTESQGMVARGVDDADQLRAFVVSEDRMKEAFGLLKTLPV.

The protein belongs to the FAD-dependent oxidoreductase family. The cofactor is FAD.

Its subcellular location is the cytoplasm. The enzyme catalyses 2 reduced [nitric oxide reductase rubredoxin domain] + NAD(+) + H(+) = 2 oxidized [nitric oxide reductase rubredoxin domain] + NADH. It functions in the pathway nitrogen metabolism; nitric oxide reduction. Its function is as follows. One of at least two accessory proteins for anaerobic nitric oxide (NO) reductase. Reduces the rubredoxin moiety of NO reductase. This is Nitric oxide reductase FlRd-NAD(+) reductase from Shigella dysenteriae serotype 1 (strain Sd197).